The chain runs to 176 residues: Prepronociceptin (176 aa).

Positions 1–19 are cleaved as a signal peptide; it reads MKVLLCDLLLLSLFSSVFS. 2 consecutive propeptides follow at residues 20-95 and 169-176; these read SCQR…MQHL and TLHQNGNV.

It belongs to the opioid neuropeptide precursor family. Specific enzymatic cleavages at paired basic residues probably yield other active peptides besides nociceptin. Post-translationally, the N-terminal domain contains 6 conserved cysteines thought to be involved in disulfide bonding and/or processing. As to expression, predominantly expressed in the brain and spinal cord. Also expressed and secreted by peripheral blood neutrophils following degranulation.

Its subcellular location is the secreted. In terms of biological role, ligand of the opioid receptor-like receptor OPRL1. It may act as a transmitter in the brain by modulating nociceptive and locomotor behavior. May be involved in neuronal differentiation and development. Blocks nociceptin action in pain transmission by inhibiting nociceptin-induced hyperalgesia and allodynia. Functionally, has potent analgesic activity. In Homo sapiens (Human), this protein is Prepronociceptin (PNOC).